Consider the following 384-residue polypeptide: Guanine nucleotide-binding protein alpha-1 subunit (384 aa).

Positions 1–22 (MGSLCSRNKHYSQADDEENTQT) are disordered. Glycine 2 carries N-myristoyl glycine lipidation. Cysteine 5 carries S-palmitoyl cysteine lipidation. The 347-residue stretch at 38 to 384 (HIQKLLLLGA…RRNLFEAGLL (347 aa)) folds into the G-alpha domain. Residues 41–54 (KLLLLGAGDSGKST) form a G1 motif region. GTP is bound by residues aspartate 49, serine 50, glycine 51, lysine 52, serine 53, threonine 54, aspartate 163, leucine 188, threonine 194, glycine 222, asparagine 288, lysine 289, aspartate 291, and alanine 356. Serine 53 is a binding site for Mg(2+). Residues 186-194 (DVLFARIRT) form a G2 motif region. Threonine 194 serves as a coordination point for Mg(2+). The interval 215 to 224 (YRLFDVGGQR) is G3 motif. The G4 motif stretch occupies residues 284 to 291 (MLFLNKFD). Residues 354 to 359 (TTALDQ) form a G5 motif region.

Belongs to the G-alpha family. G proteins are composed of 3 units; alpha, beta and gamma. The alpha chain contains the guanine nucleotide binding site. Mg(2+) is required as a cofactor.

In terms of biological role, guanine nucleotide-binding proteins (G proteins) are involved as modulators or transducers in various transmembrane signaling systems. The protein is Guanine nucleotide-binding protein alpha-1 subunit (GPA1) of Solanum tuberosum (Potato).